We begin with the raw amino-acid sequence, 731 residues long: Gelsolin (731 aa).

The tract at residues 2–125 (VVEHPEFLKA…YKKGGVASGF (124 aa)) is actin-severing. A Gelsolin-like 1 repeat occupies 25–107 (FDLVPVPPNL…VQGFESATFL (83 aa)). Tyrosine 35 is modified (phosphotyrosine). Residues glycine 41, aspartate 42, glutamate 73, aspartate 85, glycine 90, and alanine 92 each coordinate Ca(2+). The actin-actin interfilament contact point stretch occupies residues 72–75 (DESG). An a 1,2-diacyl-sn-glycero-3-phospho-(1D-myo-inositol-4,5-bisphosphate)-binding site is contributed by 111–118 (KSGLKYKK). Valine 121 contributes to the Ca(2+) binding site. A 1,2-diacyl-sn-glycero-3-phospho-(1D-myo-inositol-4,5-bisphosphate) is bound at residue 137 to 145 (RLLQVKGRR). Residues 147–219 (VRATEVPVSW…FEEGAEPEAM (73 aa)) form a Gelsolin-like 2 repeat. Ca(2+) contacts are provided by glycine 162 and aspartate 163. A disulfide bridge connects residues cysteine 164 and cysteine 177. Glutamate 185, aspartate 235, glutamate 278, aspartate 279, and glutamate 303 together coordinate Ca(2+). The Gelsolin-like 3 repeat unit spans residues 266-338 (DENPFAQGAL…LPEGGETPLF (73 aa)). 2 positions are modified to phosphotyrosine: tyrosine 358 and tyrosine 414. An actin-binding, Ca-sensitive region spans residues 383–731 (AAQHGMDDDG…LDRALAELAA (349 aa)). The stretch at 404 to 485 (SNKVPVDPAT…VQGKEPAHLM (82 aa)) is one Gelsolin-like 4 repeat. The Ca(2+) site is built by glycine 420, aspartate 421, glutamate 451, aspartate 463, glycine 468, proline 470, and threonine 500. Position 533 is an N6-acetyllysine (lysine 533). A Gelsolin-like 5 repeat occupies 533 to 591 (KAGALNSNDAFVLKTPSAAYLWVGAGASEAEKTGAQELLRVLRAQPVQVAEGSEPDSFW). Positions 540 and 541 each coordinate Ca(2+). Residue tyrosine 552 is modified to Phosphotyrosine. Residue glutamate 563 participates in Ca(2+) binding. The residue at position 600 (tyrosine 600) is a Phosphotyrosine. The stretch at 630 to 705 (IEEVPGEFMQ…VKQGFEPPSF (76 aa)) is one Gelsolin-like 6 repeat. Residues aspartate 645, aspartate 646, and glutamate 668 each coordinate Ca(2+). Phosphothreonine is present on threonine 691.

The protein belongs to the villin/gelsolin family. Binds to actin and to fibronectin. Identified in a complex composed of ACTA1, COBL, GSN and TMSB4X. Interacts with the inactive form of EIF2AK2/PKR. Interacts with FLII.

It localises to the cytoplasm. The protein localises to the cytoskeleton. Its function is as follows. Calcium-regulated, actin-modulating protein that binds to the plus (or barbed) ends of actin monomers or filaments, preventing monomer exchange (end-blocking or capping). It can promote the assembly of monomers into filaments (nucleation) as well as sever filaments already formed. Plays a role in ciliogenesis. In Equus caballus (Horse), this protein is Gelsolin (GSN).